A 257-amino-acid polypeptide reads, in one-letter code: 5'-nucleotidase SurE (257 aa).

Positions 9, 10, 40, and 93 each coordinate a divalent metal cation.

It belongs to the SurE nucleotidase family. A divalent metal cation serves as cofactor.

It is found in the cytoplasm. It carries out the reaction a ribonucleoside 5'-phosphate + H2O = a ribonucleoside + phosphate. Functionally, nucleotidase that shows phosphatase activity on nucleoside 5'-monophosphates. The chain is 5'-nucleotidase SurE from Campylobacter hominis (strain ATCC BAA-381 / DSM 21671 / CCUG 45161 / LMG 19568 / NCTC 13146 / CH001A).